We begin with the raw amino-acid sequence, 95 residues long: Protein TusB (95 aa).

Belongs to the DsrH/TusB family. Heterohexamer, formed by a dimer of trimers. The hexameric TusBCD complex contains 2 copies each of TusB, TusC and TusD. The TusBCD complex interacts with TusE.

Its subcellular location is the cytoplasm. Part of a sulfur-relay system required for 2-thiolation of 5-methylaminomethyl-2-thiouridine (mnm(5)s(2)U) at tRNA wobble positions. This Yersinia pseudotuberculosis serotype O:1b (strain IP 31758) protein is Protein TusB.